A 1485-amino-acid polypeptide reads, in one-letter code: Glutamate receptor ionotropic, NMDA 2B (1485 aa).

Positions 1–26 (MKPRAECCSPKFWLVLAVLAVSGSRA) are cleaved as a signal peptide. The Extracellular portion of the chain corresponds to 27-557 (RSQKSPPSIG…SAFLEPFSAD (531 aa)). Asn74 is a glycosylation site (N-linked (GlcNAc...) asparagine). Residues Cys86 and Cys321 are joined by a disulfide bond. Positions 127 and 284 each coordinate Zn(2+). 4 N-linked (GlcNAc...) asparagine glycosylation sites follow: Asn341, Asn348, Asn444, and Asn491. 2 cysteine pairs are disulfide-bonded: Cys429-Cys456 and Cys436-Cys457. Residues Thr514 and Arg519 each coordinate L-glutamate. The N-linked (GlcNAc...) asparagine glycan is linked to Asn542. A helical transmembrane segment spans residues 558 to 576 (VWVMMFVMLLIVSAVAVFV). At 577 to 603 (FEYFSPVGYNRCLADGREPGGPSFTIG) the chain is on the cytoplasmic side. Residues 604-623 (KAIWLLWGLVFNNSVPVQNP) constitute an intramembrane region (discontinuously helical). A pore-forming region spans residues 604–623 (KAIWLLWGLVFNNSVPVQNP). The Cytoplasmic segment spans residues 624-630 (KGTTSKI). Residues 631–646 (MVSVWAFFAVIFLASY) traverse the membrane as a helical segment. Topologically, residues 647–817 (TANLAAFMIQ…VMSSQLDIDN (171 aa)) are extracellular. An N-linked (GlcNAc...) asparagine glycan is attached at Asn688. Residues 690–691 (ST) and Asp732 contribute to the L-glutamate site. Cys746 and Cys801 are disulfide-bonded. Residues 818-837 (MAGVFYMLGAAMALSLITFI) form a helical membrane-spanning segment. The Cytoplasmic portion of the chain corresponds to 838–1485 (CEHLFYWQFR…EKLSSIESDV (648 aa)). Phosphoserine occurs at positions 882, 886, 917, and 920. Phosphotyrosine is present on residues Tyr962 and Tyr1039. Phosphoserine is present on residues Ser1058, Ser1061, and Ser1064. The segment at 1074 to 1097 (EGNAAKRRKQQYKDSLKKRPASAK) is disordered. Tyr1109 and Tyr1133 each carry phosphotyrosine. Phosphoserine is present on Ser1143. Position 1155 is a phosphotyrosine (Tyr1155). Positions 1162-1194 (FKRDSVSGGGPCTNRSHLKHGAGDKHGVVSGVP) are disordered. Phosphoserine occurs at positions 1255 and 1259. The segment covering 1269–1278 (PVAVPSNAPS) has biased composition (low complexity). The segment at 1269 to 1302 (PVAVPSNAPSTKYPQSPTNSKAQKKTRNKLRRQH) is disordered. The span at 1280-1289 (KYPQSPTNSK) shows a compositional bias: polar residues. A compositionally biased stretch (basic residues) spans 1290-1301 (AQKKTRNKLRRQ). Residues 1292–1304 (KKTRNKLRRQHSY) form an interaction with DAPK1 region. Position 1303 is a phosphoserine; by DAPK1 (Ser1303). Position 1475 is a phosphotyrosine (Tyr1475). Residues 1483–1485 (SDV) carry the PDZ-binding motif.

This sequence belongs to the glutamate-gated ion channel (TC 1.A.10.1) family. NR2B/GRIN2B subfamily. As to quaternary structure, heterotetramer. Forms heterotetrameric channels composed of two GluN1/zeta subunits (GRIN1), and two identical GluN2/epsilon subunits (GRIN2A, GRIN2B, GRIN2C or GRIN2D) or GluN3 subunits (GRIN3A or GRIN3B) (in vitro). Can also form heterotetrameric channels that contain at least two GluN1 subunits and at least two different GluN2 subunits (or a combination of one GluN2 and one GluN3 subunits) (in vitro). In vivo, the subunit composition may depend on the expression levels of the different subunits. Found in a complex with GRIN1, GRIN3A and PPP2CB. Found in a complex with GRIN1 and GRIN3B. Interacts with MAGI3. Interacts with HIP1 and Neto1. Interacts with PDZ domains of PATJ, DLG3 and DLG4. Interacts with DAPK1. Found in a complex with GRIN1 and PRR7. Interacts with PRR7. Interacts with CAMK2A. Interacts with ARC; preventing ARC oligomerization. Interacts with TMEM25. Interacts (via the extreme C-terminus) with FRMPD2 (via the second PDZ domain); the interaction is direct and is likely to promote NMDAR-mediated neural signal transmission. Interacts with FAM81A; the interaction facilitates condensate formation via liquid-liquid phase separation. In terms of processing, phosphorylated on tyrosine residues. Phosphorylation at Ser-1303 by DAPK1 enhances synaptic NMDA receptor channel activity.

The protein localises to the cell membrane. It is found in the postsynaptic cell membrane. Its subcellular location is the cell projection. The protein resides in the dendrite. It localises to the late endosome. The protein localises to the lysosome. It is found in the cytoplasm. Its subcellular location is the cytoskeleton. It catalyses the reaction Ca(2+)(in) = Ca(2+)(out). The enzyme catalyses Na(+)(in) = Na(+)(out). The catalysed reaction is K(+)(in) = K(+)(out). Component of N-methyl-D-aspartate (NMDA) receptors (NMDARs) that function as heterotetrameric, ligand-gated cation channels with high calcium permeability and voltage-dependent block by Mg(2+). Participates in synaptic plasticity for learning and memory formation by contributing to the long-term depression (LTD) of hippocampus membrane currents. Channel activation requires binding of the neurotransmitter L-glutamate to the GluN2 subunit, glycine or D-serine binding to the GluN1 subunit, plus membrane depolarization to eliminate channel inhibition by Mg(2+). NMDARs mediate simultaneously the potasium efflux and the influx of calcium and sodium. Each GluN2 subunit confers differential attributes to channel properties, including activation, deactivation and desensitization kinetics, pH sensitivity, Ca2(+) permeability, and binding to allosteric modulators. In concert with DAPK1 at extrasynaptic sites, acts as a central mediator for stroke damage. Its phosphorylation at Ser-1303 by DAPK1 enhances synaptic NMDA receptor channel activity inducing injurious Ca2+ influx through them, resulting in an irreversible neuronal death. The polypeptide is Glutamate receptor ionotropic, NMDA 2B (Canis lupus familiaris (Dog)).